Here is a 370-residue protein sequence, read N- to C-terminus: tRNA-specific 2-thiouridylase MnmA (370 aa).

Residues 19-26 (AMSGGVDS) and Leu-45 each bind ATP. Cys-113 (nucleophile) is an active-site residue. The cysteines at positions 113 and 209 are disulfide-linked. Gly-137 is an ATP binding site. Residues 159–161 (RDQ) form an interaction with tRNA region. The active-site Cysteine persulfide intermediate is the Cys-209.

It belongs to the MnmA/TRMU family.

The protein localises to the cytoplasm. The catalysed reaction is S-sulfanyl-L-cysteinyl-[protein] + uridine(34) in tRNA + AH2 + ATP = 2-thiouridine(34) in tRNA + L-cysteinyl-[protein] + A + AMP + diphosphate + H(+). Its function is as follows. Catalyzes the 2-thiolation of uridine at the wobble position (U34) of tRNA, leading to the formation of s(2)U34. The chain is tRNA-specific 2-thiouridylase MnmA from Zymomonas mobilis subsp. mobilis (strain ATCC 31821 / ZM4 / CP4).